Reading from the N-terminus, the 397-residue chain is Mesoderm posterior protein 2 (397 aa).

Disordered stretches follow at residues 28–92, 152–208, 222–295, and 351–376; these read WDST…REKL, QRGD…GRRP, SPSA…VPWT, and PNSE…SGLR. 2 stretches are compositionally biased toward low complexity: residues 32-48 and 58-71; these read SPAS…CDGA and SCSS…ATTP. The 55-residue stretch at 81-135 folds into the bHLH domain; sequence GQRQSASEREKLRMRTLARALHELRRFLPPSLAPAGQSLTKIETLRLAIRYIGHL. 13 tandem repeats follow at residues 179-180, 181-182, 183-184, 185-186, 187-188, 189-190, 191-192, 193-194, 195-196, 197-198, 199-200, 201-202, and 203-204. The interval 179–204 is 13 X 2 AA tandem repeats of G-Q; the sequence is GQGQGQGQGQGQGQGQGQGQGQGQGQ. Residues 180–206 show a composition bias toward gly residues; sequence QGQGQGQGQGQGQGQGQGQGQGQGQGR. Basic and acidic residues predominate over residues 235–244; the sequence is RLGRGVHDTD. Composition is skewed to polar residues over residues 258 to 270 and 365 to 375; these read PPYS…SDAS and SEASPPQSSGL.

Degraded by the proteasome.

The protein localises to the nucleus. Transcription factor with important role in somitogenesis. Defines the rostrocaudal patterning of the somite by participating in distinct Notch pathways. Also regulates the FGF signaling pathway. Specifies the rostral half of the somites. Generates rostro-caudal polarity of somites by down-regulating in the presumptive rostral domain DLL1, a Notch ligand. Participates in the segment border formation by activating in the anterior presomitic mesoderm LFNG, a negative regulator of DLL1-Notch signaling. Acts as a strong suppressor of Notch activity. Together with MESP1 is involved in the epithelialization of somitic mesoderm and in the development of cardiac mesoderm. This chain is Mesoderm posterior protein 2 (MESP2), found in Homo sapiens (Human).